Here is a 214-residue protein sequence, read N- to C-terminus: Thymidylate kinase (214 aa).

15–22 (GLEGAGKT) lines the ATP pocket.

This sequence belongs to the thymidylate kinase family.

It catalyses the reaction dTMP + ATP = dTDP + ADP. Phosphorylation of dTMP to form dTDP in both de novo and salvage pathways of dTTP synthesis. In Haemophilus ducreyi (strain 35000HP / ATCC 700724), this protein is Thymidylate kinase.